An 899-amino-acid polypeptide reads, in one-letter code: Probable dipeptidyl-aminopeptidase B (899 aa).

The interval 1-69 (MKLDRMRVGS…NHNGRTQGNY (69 aa)) is disordered. The Cytoplasmic portion of the chain corresponds to 1 to 99 (MKLDRMRVGS…NGKSSQRRTL (99 aa)). Residues 32-43 (DSSSTASISLTL) are compositionally biased toward low complexity. The helical; Signal-anchor for type II membrane protein transmembrane segment at 100 to 120 (IVFWLLVALCVGGWAVAFLFF) threads the bilayer. Residues 121–899 (VTSPGNKTST…KYFNLSFLGH (779 aa)) are Vacuolar-facing. The segment covering 128-139 (TSTSPHSGSNSP) has biased composition (polar residues). Residues 128–149 (TSTSPHSGSNSPEGDVTKPGIP) are disordered. N212, N308, and N360 each carry an N-linked (GlcNAc...) asparagine glycan. Residue S765 is the Charge relay system of the active site. Residues N819, N824, and N827 are each glycosylated (N-linked (GlcNAc...) asparagine). Active-site charge relay system residues include D842 and H875. The N-linked (GlcNAc...) asparagine glycan is linked to N893.

Belongs to the peptidase S9B family.

Its subcellular location is the vacuole membrane. The enzyme catalyses Release of an N-terminal dipeptide, Xaa-Yaa-|-Zaa-, from a polypeptide, preferentially when Yaa is Pro, provided Zaa is neither Pro nor hydroxyproline.. In terms of biological role, type IV dipeptidyl-peptidase which removes N-terminal dipeptides sequentially from polypeptides having unsubstituted N-termini provided that the penultimate residue is proline. This Trichophyton verrucosum (strain HKI 0517) protein is Probable dipeptidyl-aminopeptidase B (DAPB).